The following is a 747-amino-acid chain: MSKLKSSESVRVVVRCRPMNGKEKAASYDKVVDVDVKLGQVSVKNPKGTAHEMPKTFTFDAVYDWNAKQFELYDETFRPLVDSVLQGFNGTIFAYGQTGTGKTYTMEGIRGDPEKRGVIPNSFDHIFTHISRSQNQQYLVRASYLEIYQEEIRDLLSKDQTKRLELKERPDTGVYVKDLSSFVTKSVKEIEHVMNVGNQNRSVGATNMNEHSSRSHAIFVITIECSEVGLDGENHIRVGKLNLVDLAGSERQAKTGAQGERLKEATKINLSLSALGNVISALVDGKSTHIPYRDSKLTRLLQDSLGGNAKTVMVANVGPASYNVEETLTTLRYANRAKNIKNKPRVNEDPKDALLREFQEEIARLKAQLEKRSIGRRKRREKRREGGGSGGGGEEEEEEGEEGEEEGDDKDDYWREQQEKLEIEKRAIVEDHSLVAEEKMRLLKEKEKKMEDLRREKDAAEMLGAKIKAMESKLLVGGKNIVDHTNEQQKILEQKRQEIAEQKRREREIQQQMESRDEETLELKETYSSLQQEVDIKTKKLKKLFSKLQAVKAEIHDLQEEHIKERQELEQTQNELTRELKLKHLIIENFIPLEEKSKIMNRAFFDEEEDHWKLHPITRLENQQMMKRPVSAVGYKRPLSQHARMSMMIRPEARYRAENIVLLELDMPSRTTRDYEGPAIAPKVQAALDAALQDEDEIQVDASSFESTANKKSKARPKSGRKSGSSSSSSGTPASQLYPQSRGLVPK.

An N-acetylmethionine modification is found at methionine 1. Serine 2 carries the N-acetylserine; in Kinesin-like protein KIF3B, N-terminally processed modification. One can recognise a Kinesin motor domain in the interval 9 to 340 (SVRVVVRCRP…LRYANRAKNI (332 aa)). ATP is bound at residue 96–103 (GQTGTGKT). A coiled-coil region spans residues 346–579 (VNEDPKDALL…EQTQNELTRE (234 aa)). Disordered stretches follow at residues 374-412 (IGRR…DKDD) and 699-747 (QVDA…LVPK). Acidic residues predominate over residues 393 to 411 (GEEEEEEGEEGEEEGDDKD). The tract at residues 580 to 747 (LKLKHLIIEN…YPQSRGLVPK (168 aa)) is globular. The segment covering 701–710 (DASSFESTAN) has biased composition (polar residues). A compositionally biased stretch (basic residues) spans 711–721 (KKSKARPKSGR). Over residues 722 to 735 (KSGSSSSSSGTPAS) the composition is skewed to low complexity.

It belongs to the TRAFAC class myosin-kinesin ATPase superfamily. Kinesin family. Kinesin II subfamily. In terms of assembly, heterodimer of KIF3A and KIF3B. KIF3A/KIF3B heterodimer interacts with KIFAP3 forming a heterotrimeric (KIF3A/KIF3B/KIFAP3) complex. Interacts directly with IFT20. Interacts with the SMC3 subunit of the cohesin complex. Interacts with FLCN.

Its subcellular location is the cytoplasm. The protein localises to the cytoskeleton. The protein resides in the cell projection. It is found in the cilium. It localises to the dendritic spine. In terms of biological role, microtubule-based molecular motor that transport intracellular cargos, such as vesicles, organelles and protein complexes. Uses ATP hydrolysis to generate force to bind and move along the microtubule. Plays a role in cilia formation. Involved in photoreceptor integrity and opsin trafficking in rod photoreceptors. Transports vesicles containing N-methyl-D-aspartate (NMDA) receptor subunit GRIN2A into neuronal dendrites. The polypeptide is Kinesin-like protein KIF3B (KIF3B) (Homo sapiens (Human)).